The chain runs to 382 residues: uncharacterized protein (382 aa).

The next 12 helical transmembrane spans lie at 8-28, 41-61, 73-93, 94-114, 133-153, 157-177, 208-228, 235-255, 274-294, 295-315, 325-345, and 349-369; these read VLLL…LNTL, WQVG…TLIA, SYHY…LSVD, FWSW…IWVI, AAYM…LGVV, LLSV…PLLF, GCII…LYLS, ASVG…QWPI, VVIL…ALFI, LGCA…EKVS, ALLM…SLLM, and SDNL…MMLL.

Belongs to the major facilitator superfamily. YcaD (TC 2.A.1.26) family.

It is found in the cell inner membrane. This is an uncharacterized protein from Yersinia enterocolitica serotype O:8 / biotype 1B (strain NCTC 13174 / 8081).